We begin with the raw amino-acid sequence, 113 residues long: Hydrogenase maturation factor HybF (113 aa).

Ni(2+) is bound by residues His-2 and Glu-3. Residues Cys-73, Cys-76, Cys-89, and Cys-92 each coordinate Zn(2+).

The protein belongs to the HypA/HybF family. HybF subfamily.

Its function is as follows. Involved in the maturation of [NiFe] hydrogenases. Required for nickel insertion into the metal center of the hydrogenase. In Escherichia coli O157:H7, this protein is Hydrogenase maturation factor HybF.